The chain runs to 62 residues: MNISWEMILPLIVLQLALAVFALISCIKEERTNGPKWMWAAIIVCINIIGPILFFTVGRKQR.

The next 2 helical transmembrane spans lie at 7–27 and 37–57; these read MILPLIVLQLALAVFALISCI and WMWAAIIVCINIIGPILFFTV.

The protein resides in the cell membrane. Its function is as follows. Together with YxlD is important for negative regulation of sigma Y activity. The sequence is that of Negative regulatory protein YxlE (yxlE) from Bacillus subtilis (strain 168).